The primary structure comprises 353 residues: S-adenosylmethionine:tRNA ribosyltransferase-isomerase (353 aa).

This sequence belongs to the QueA family. As to quaternary structure, monomer.

The protein resides in the cytoplasm. The enzyme catalyses 7-aminomethyl-7-carbaguanosine(34) in tRNA + S-adenosyl-L-methionine = epoxyqueuosine(34) in tRNA + adenine + L-methionine + 2 H(+). It functions in the pathway tRNA modification; tRNA-queuosine biosynthesis. Functionally, transfers and isomerizes the ribose moiety from AdoMet to the 7-aminomethyl group of 7-deazaguanine (preQ1-tRNA) to give epoxyqueuosine (oQ-tRNA). The polypeptide is S-adenosylmethionine:tRNA ribosyltransferase-isomerase (Marinomonas sp. (strain MWYL1)).